The following is a 453-amino-acid chain: Allantoinase (453 aa).

Residues histidine 59, histidine 61, lysine 146, histidine 186, histidine 242, and aspartate 315 each coordinate Zn(2+). N6-carboxylysine is present on lysine 146.

It belongs to the metallo-dependent hydrolases superfamily. Allantoinase family. As to quaternary structure, homotetramer. It depends on Zn(2+) as a cofactor. Post-translationally, carboxylation allows a single lysine to coordinate two zinc ions.

The enzyme catalyses (S)-allantoin + H2O = allantoate + H(+). The protein operates within nitrogen metabolism; (S)-allantoin degradation; allantoate from (S)-allantoin: step 1/1. Functionally, catalyzes the conversion of allantoin (5-ureidohydantoin) to allantoic acid by hydrolytic cleavage of the five-member hydantoin ring. The protein is Allantoinase of Escherichia coli O127:H6 (strain E2348/69 / EPEC).